The chain runs to 727 residues: Epithelial splicing regulatory protein 2 (727 aa).

The tract at residues 1-22 (MTPPPPPPPPPGPDPAADPAAD) is disordered. Phosphoserine is present on serine 83. RRM domains are found at residues 257 to 353 (TVVR…RFLS), 358 to 438 (VILR…RSTA), and 475 to 555 (DCVR…PCST). At serine 573 the chain carries Phosphoserine.

The protein belongs to the ESRP family. In terms of assembly, interacts with RBPMS. Epithelial cell-specific.

It is found in the nucleus. Its function is as follows. mRNA splicing factor that regulates the formation of epithelial cell-specific isoforms. Specifically regulates the expression of FGFR2-IIIb, an epithelial cell-specific isoform of FGFR2. Also regulates the splicing of CD44, CTNND1, ENAH, 3 transcripts that undergo changes in splicing during the epithelial-to-mesenchymal transition (EMT). Acts by directly binding specific sequences in mRNAs. Binds the GU-rich sequence motifs in the ISE/ISS-3, a cis-element regulatory region present in the mRNA of FGFR2. This is Epithelial splicing regulatory protein 2 (ESRP2) from Homo sapiens (Human).